The following is a 391-amino-acid chain: Imidazolonepropionase (391 aa).

Residues His72 and His74 each contribute to the Fe(3+) site. Residues His72 and His74 each contribute to the Zn(2+) site. 4-imidazolone-5-propanoate is bound by residues Arg81, Tyr139, and His166. Tyr139 lines the N-formimidoyl-L-glutamate pocket. Position 229 (His229) interacts with Fe(3+). A Zn(2+)-binding site is contributed by His229. Residue Gln232 coordinates 4-imidazolone-5-propanoate. Asp303 serves as a coordination point for Fe(3+). Asp303 is a Zn(2+) binding site. 2 residues coordinate N-formimidoyl-L-glutamate: Asn305 and Gly307. Residue Ser308 participates in 4-imidazolone-5-propanoate binding.

Belongs to the metallo-dependent hydrolases superfamily. HutI family. It depends on Zn(2+) as a cofactor. The cofactor is Fe(3+).

It is found in the cytoplasm. The enzyme catalyses 4-imidazolone-5-propanoate + H2O = N-formimidoyl-L-glutamate. It functions in the pathway amino-acid degradation; L-histidine degradation into L-glutamate; N-formimidoyl-L-glutamate from L-histidine: step 3/3. In terms of biological role, catalyzes the hydrolytic cleavage of the carbon-nitrogen bond in imidazolone-5-propanoate to yield N-formimidoyl-L-glutamate. It is the third step in the universal histidine degradation pathway. The chain is Imidazolonepropionase from Streptomyces coelicolor (strain ATCC BAA-471 / A3(2) / M145).